Here is a 280-residue protein sequence, read N- to C-terminus: Late embryogenesis abundant protein 76 (280 aa).

Disordered regions lie at residues 1–156 (MASN…GEAV) and 220–241 (EEEDREHYPGTTTCTTQSTDPT). Basic and acidic residues predominate over residues 28-39 (MRDKAEEGKDKT). 5 LEA 11-mer repeat repeats span residues 31-41 (KAEEGKDKTSQ), 53-63 (TAQAAKDKTSQ), 75-85 (TAQAAKDKTSQ), 97-107 (TAQAAKDKTSQ), and 119-129 (TTQSSKEKTSQ). Low complexity predominate over residues 40-114 (SQTAQKAQQK…TSQAAQTTQQ (75 aa)). Basic and acidic residues-rich tracts occupy residues 115-127 (KAHETTQSSKEKT) and 136-145 (EKARETKDKT). A compositionally biased stretch (low complexity) spans 230–239 (TTTCTTQSTD).

The protein belongs to the LEA type 4 family.

Functionally, lea proteins are late embryonic proteins abundant in higher plant seed embryos. The polypeptide is Late embryogenesis abundant protein 76 (Brassica napus (Rape)).